A 203-amino-acid polypeptide reads, in one-letter code: MLCWIGYKNGILPQQNSTLYPWLNPSKCGVIFDGFQLVGDDFNSDQTAENTSPAWQVLYTTHLQSCSPIHSGENFAPIPLYKQLKNQPHLSQDLIKWQENWQACDQLQMNGAVLEQQSLAEISDHQSTLSKHGRYLAQEIEKETGIPTYYYLYRVGGQSLESEKSRCCPSCGANWALKDAIFDTFHFKCDTCRLVSNLSWNFL.

This is an uncharacterized protein from Haemophilus influenzae (strain ATCC 51907 / DSM 11121 / KW20 / Rd).